The primary structure comprises 137 residues: ATP synthase epsilon chain (137 aa).

The protein belongs to the ATPase epsilon chain family. In terms of assembly, F-type ATPases have 2 components, CF(1) - the catalytic core - and CF(0) - the membrane proton channel. CF(1) has five subunits: alpha(3), beta(3), gamma(1), delta(1), epsilon(1). CF(0) has three main subunits: a, b and c.

It localises to the cell membrane. Its function is as follows. Produces ATP from ADP in the presence of a proton gradient across the membrane. In Streptococcus agalactiae serotype Ia (strain ATCC 27591 / A909 / CDC SS700), this protein is ATP synthase epsilon chain.